Consider the following 492-residue polypeptide: Probable protein phosphatase 2C 33 (492 aa).

Residues 1-46 are disordered; that stretch reads MGSCLSAESRSPRPGSPCSPAFSVRKRKNSKKRPGSRNSSFDYRRE. The span at 24–35 shows a compositional bias: basic residues; that stretch reads VRKRKNSKKRPG. The 330-residue stretch at 64–393 folds into the PPM-type phosphatase domain; it reads VACIYTQQGK…DDCAAVCLYL (330 aa). The Mn(2+) site is built by aspartate 100, glycine 101, aspartate 338, and aspartate 384. Residues 406–468 are disordered; that stretch reads SISKLEDGEE…ADNLDSEPGT (63 aa). Residues 412 to 427 are compositionally biased toward acidic residues; that stretch reads DGEEEELKATTEDDDA. The span at 441 to 460 shows a compositional bias: basic and acidic residues; the sequence is SGKEIALDESETEKLIKEAD.

The protein belongs to the PP2C family. It depends on Mg(2+) as a cofactor. Mn(2+) is required as a cofactor.

The catalysed reaction is O-phospho-L-seryl-[protein] + H2O = L-seryl-[protein] + phosphate. It carries out the reaction O-phospho-L-threonyl-[protein] + H2O = L-threonyl-[protein] + phosphate. This Arabidopsis thaliana (Mouse-ear cress) protein is Probable protein phosphatase 2C 33 (PPC6-1).